Here is a 393-residue protein sequence, read N- to C-terminus: Stearoyl-[acyl-carrier-protein] 9-desaturase, chloroplastic (393 aa).

The N-terminal 30 residues, 1–30 (MALNFNSPTFQSIKTTRRPCSPLRSPRVFM), are a transit peptide targeting the chloroplast. Fe cation-binding residues include E135, E173, H176, E226, E259, and H262.

This sequence belongs to the fatty acid desaturase type 2 family. Homodimer. It depends on Fe(2+) as a cofactor.

Its subcellular location is the plastid. It localises to the chloroplast. It carries out the reaction octadecanoyl-[ACP] + 2 reduced [2Fe-2S]-[ferredoxin] + O2 + 2 H(+) = (9Z)-octadecenoyl-[ACP] + 2 oxidized [2Fe-2S]-[ferredoxin] + 2 H2O. Its pathway is lipid metabolism; fatty acid metabolism. Functionally, converts stearoyl-ACP to oleoyl-ACP by introduction of a cis double bond between carbons 9 and 10 of the acyl chain. The sequence is that of Stearoyl-[acyl-carrier-protein] 9-desaturase, chloroplastic from Solanum commersonii (Commerson's wild potato).